The primary structure comprises 299 residues: Putative transposase InsZ (299 aa).

Residues Pro-276–Val-291 are compositionally biased toward basic residues. Residues Pro-276–Lys-299 are disordered.

The protein is Putative transposase InsZ (insZ) of Escherichia coli (strain K12).